A 147-amino-acid chain; its full sequence is Small ribosomal subunit protein bS6 (147 aa).

A disordered region spans residues Ala-103–Glu-147. The segment covering Gly-133–Glu-147 has biased composition (acidic residues).

Belongs to the bacterial ribosomal protein bS6 family.

Functionally, binds together with bS18 to 16S ribosomal RNA. This chain is Small ribosomal subunit protein bS6, found in Syntrophobacter fumaroxidans (strain DSM 10017 / MPOB).